The chain runs to 109 residues: Nucleoid-associated protein PC1_1077 (109 aa).

This sequence belongs to the YbaB/EbfC family. As to quaternary structure, homodimer.

The protein localises to the cytoplasm. It is found in the nucleoid. Its function is as follows. Binds to DNA and alters its conformation. May be involved in regulation of gene expression, nucleoid organization and DNA protection. The protein is Nucleoid-associated protein PC1_1077 of Pectobacterium carotovorum subsp. carotovorum (strain PC1).